The following is a 62-amino-acid chain: Large ribosomal subunit protein eL24 (62 aa).

Zn(2+) contacts are provided by Cys-7, Cys-10, Cys-33, and Cys-37. A C4-type zinc finger spans residues 7-37 (CSFCGKDILPGTGLMYVRNDGSLLWFCSSKC).

It belongs to the eukaryotic ribosomal protein eL24 family. Part of the 50S ribosomal subunit. Forms a cluster with proteins L3 and L14. It depends on Zn(2+) as a cofactor.

Functionally, binds to the 23S rRNA. This chain is Large ribosomal subunit protein eL24, found in Sulfolobus acidocaldarius (strain ATCC 33909 / DSM 639 / JCM 8929 / NBRC 15157 / NCIMB 11770).